Reading from the N-terminus, the 248-residue chain is Putative eukaryotic initiation factor 4A-like protein (248 aa).

A Q motif motif is present at residues 14-42 (VGFASLGLNEQLINNIKRYGITKLTPFQM). The region spanning 45 to 239 (IKEIKENSNV…NTFIKIPKII (195 aa)) is the Helicase ATP-binding domain. 58–65 (SIEGTGRT) is an ATP binding site. The DEAD box signature appears at 185-188 (DELD).

Belongs to the DEAD box helicase family. eIF4A subfamily.

This is Putative eukaryotic initiation factor 4A-like protein from Dictyostelium discoideum (Social amoeba).